The primary structure comprises 230 residues: CRP-like protein Clp (230 aa).

Position 18-139 (P18–V139) interacts with a nucleoside 3',5'-cyclic phosphate. The 73-residue stretch at L158 to R230 folds into the HTH crp-type domain. Residues R190–K209 constitute a DNA-binding region (H-T-H motif).

In terms of assembly, homodimer.

The protein resides in the cytoplasm. Allosterically inhibited by cyclic di-GMP (c-di-GMP), which binds to Clp and abolishes its ability to bind its target gene promoter. Global transcriptional regulator that regulates virulence factors production by activating or repressing the expression of a large set of genes in diffusible signal factor (DSF) pathway. The sequence is that of CRP-like protein Clp (clp) from Xanthomonas axonopodis pv. citri (strain 306).